Here is a 348-residue protein sequence, read N- to C-terminus: Phenylalanine--tRNA ligase alpha subunit (348 aa).

Position 259 (glutamate 259) interacts with Mg(2+).

Belongs to the class-II aminoacyl-tRNA synthetase family. Phe-tRNA synthetase alpha subunit type 1 subfamily. In terms of assembly, tetramer of two alpha and two beta subunits. It depends on Mg(2+) as a cofactor.

It localises to the cytoplasm. The catalysed reaction is tRNA(Phe) + L-phenylalanine + ATP = L-phenylalanyl-tRNA(Phe) + AMP + diphosphate + H(+). The polypeptide is Phenylalanine--tRNA ligase alpha subunit (Levilactobacillus brevis (strain ATCC 367 / BCRC 12310 / CIP 105137 / JCM 1170 / LMG 11437 / NCIMB 947 / NCTC 947) (Lactobacillus brevis)).